The primary structure comprises 462 residues: Centrosomal protein of 55 kDa (462 aa).

The span at 1-11 (MSSRSPKDLIK) shows a compositional bias: basic and acidic residues. The tract at residues 1 to 25 (MSSRSPKDLIKSKWGSRPSSSKSDT) is disordered. Residues 12-23 (SKWGSRPSSSKS) show a composition bias toward low complexity. Coiled coils occupy residues 50 to 185 (KVAN…QQWL) and 228 to 400 (YLQE…KQLH). Phosphoserine is present on residues Ser96 and Ser99. Residues 157-235 (ANCFNSSMNS…EGYLQEEKQK (79 aa)) form an interaction with TSG101 region. Residues 160-214 (FNSSMNSIHEKEMQLKDALEKNQQWLVYDQQREAYVKGLLAKIFELEKRTETAAA) form an interaction with PDCD6IP region. The required for localization to the interphase centrosome and to the midbody during cytokinesis stretch occupies residues 354-462 (QMQACTLDFE…LLVHVEYCMK (109 aa)). 2 positions are modified to phosphoserine: Ser423 and Ser426. Thr428 carries the post-translational modification Phosphothreonine. Ser434 carries the phosphoserine; by PLK1 modification.

As to quaternary structure, homodimer. Interacts (phosphorylated on Ser-423 and Ser-426) with PLK1; the interaction is indirect via the MTMR3:MTMR4 heterooligomer, occurs during early mitosis, regulates the phosphorylation of CEP55 by PLK1 and its recruitment to the midbody where it can mediate cell abscission. Interacts with AKAP9/CG-NAP; the interaction occurs in interphase and is lost upon mitotic entry. Interacts with PCNT/Kendrin; the interaction occurs in interphase and is lost upon mitotic entry. Directly interacts with PDCD6IP; this interaction is required for PDCD6IP targeting to the midbody; CEP55 binds PDCD6IP in a 2:1 stoichiometry; PDCD6IP competes with TSG101 for the same binding site. Interacts with TSG101; TSG101 competes with PDCD6IP for the same binding site; interaction is required for cytokinesis. Interacts with MVB12A, VPS37B, VPS37C and VPS28. In terms of processing, there is a hierachy of phosphorylation, where both Ser-423 and Ser-426 are phosphorylated at the onset of mitosis, prior to Ser-434. Phosphorylation at Ser-423 and Ser-426 is required for dissociation from the centrosome at the G2/M boundary. Phosphorylation at the 3 sites, Ser-423, Ser-426 and Ser-434, is required for protein function at the final stages of cell division to complete cytokinesis successfully.

The protein localises to the cytoplasm. It localises to the cytoskeleton. It is found in the microtubule organizing center. The protein resides in the centrosome. Its subcellular location is the centriole. The protein localises to the cleavage furrow. It localises to the midbody. It is found in the midbody ring. Functionally, plays a role in mitotic exit and cytokinesis. Recruits PDCD6IP and TSG101 to midbody during cytokinesis. Required for successful completion of cytokinesis. Not required for microtubule nucleation. Plays a role in the development of the brain and kidney. The sequence is that of Centrosomal protein of 55 kDa from Rattus norvegicus (Rat).